Here is a 2069-residue protein sequence, read N- to C-terminus: Dedicator of cytokinesis protein 9 (2069 aa).

Phosphoserine is present on residues Ser21, Ser32, Ser167, and Ser170. Residues Gly174–Gln281 enclose the PH domain. Residues Glu290–Asp313 form a disordered region. Ser433 and Ser443 each carry phosphoserine. Residues Thr640–Val818 form the C2 DOCK-type domain. Residues Ser927 and Ser1235 each carry the phosphoserine modification. A Phosphothreonine modification is found at Thr1241. A disordered region spans residues Thr1241–Ser1282. Phosphoserine is present on residues Ser1255, Ser1261, and Ser1264. Residues Ser1255–Glu1267 are compositionally biased toward polar residues. The segment covering Arg1268 to Gln1280 has biased composition (basic and acidic residues). A DOCKER domain is found at Lys1605–Gly2069. Residues Asp1693–Gly2069 are interaction with CDC42. Coiled-coil stretches lie at residues Ile1948–Gly1982 and Asn2034–Gln2067.

Belongs to the DOCK family. In terms of assembly, homodimer. Interacts preferentially with nucleotide-depleted CDC42. Widely expressed, with highest expression in heart and placenta. Expressed at intermediate level in kidney, brain, lung and skeletal muscle.

Its subcellular location is the endomembrane system. Guanine nucleotide-exchange factor (GEF) that activates CDC42 by exchanging bound GDP for free GTP. Overexpression induces filopodia formation. This Homo sapiens (Human) protein is Dedicator of cytokinesis protein 9.